Reading from the N-terminus, the 377-residue chain is Adenosine 3'-phospho 5'-phosphosulfate transporter 2 (377 aa).

10 helical membrane-spanning segments follow: residues 50–70 (LCCGGVFALYLVYGYMQELIF), 77–97 (PYGWYLTLVQFAYYTAFGYIE), 115–135 (ALLAFLTLGTMGLSNSSVGYL), 138–158 (PTQVIFKCCKLIPVLIGSVLI), 164–184 (GPMDFFAATAMCLGLILFTLA), 195–215 (FGVFLISLALLCDAAIGNVQE), 228–248 (VVIYSYGIGFVYLAVIMLLSG), 266–286 (GYAFLFSLTGYLGIQIVLTLV), 293–313 (LAATVTTARKAVTIALSFVFF), and 317–337 (FTIQYLWSGLIVVFGIYLNVY).

This sequence belongs to the nucleotide-sugar transporter family. SLC35B subfamily.

It is found in the golgi apparatus membrane. Its function is as follows. Mediates the transport of adenosine 3'-phospho 5'-phosphosulfate (PAPS), from cytosol into Golgi. PAPS is a universal sulfuryl donor for sulfation events that take place in the Golgi. Essential for viability. Involved in glycosaminoglycan synthesis and the subsequent signaling. May be involved in hh and dpp signaling by controlling the sulfation of heparan sulfate (HS). The protein is Adenosine 3'-phospho 5'-phosphosulfate transporter 2 of Anopheles gambiae (African malaria mosquito).